Consider the following 354-residue polypeptide: Fusarinine C esterase sidJ (354 aa).

Belongs to the sidJ hydrolase family. In terms of assembly, homodimer.

The catalysed reaction is fusarinine C + 3 H2O = 3 fusarinine + Fe(3+). In terms of biological role, displays specific fusarinine C (FsC) esterase activity but does not hydrolyze triacetylfusarinine C (TAFC), which has the same core structure as fusarinine C. Both extra- and intracellular siderophores have been shown to be crucial for the virulence. Subsequent to chelation of iron and uptake, FsC and TAFC are hydrolyzed and the iron is transferred to the metabolism or to the intracellular siderophore ferricrocin (FC) for transport and storage of iron. This chain is Fusarinine C esterase sidJ, found in Aspergillus fumigatus (strain ATCC MYA-4609 / CBS 101355 / FGSC A1100 / Af293) (Neosartorya fumigata).